Here is a 369-residue protein sequence, read N- to C-terminus: Small ribosomal subunit biogenesis GTPase RsgA (369 aa).

The region spanning 116–271 (GEQLIAANLD…LIDNPGIREI (156 aa)) is the CP-type G domain. GTP is bound by residues 161-164 (NKID) and 213-221 (GSSGVGKST). Positions 294, 299, 301, and 307 each coordinate Zn(2+).

The protein belongs to the TRAFAC class YlqF/YawG GTPase family. RsgA subfamily. In terms of assembly, monomer. Associates with 30S ribosomal subunit, binds 16S rRNA. The cofactor is Zn(2+).

The protein localises to the cytoplasm. In terms of biological role, one of several proteins that assist in the late maturation steps of the functional core of the 30S ribosomal subunit. Helps release RbfA from mature subunits. May play a role in the assembly of ribosomal proteins into the subunit. Circularly permuted GTPase that catalyzes slow GTP hydrolysis, GTPase activity is stimulated by the 30S ribosomal subunit. This is Small ribosomal subunit biogenesis GTPase RsgA from Methanosarcina acetivorans (strain ATCC 35395 / DSM 2834 / JCM 12185 / C2A).